The chain runs to 203 residues: SOSS complex subunit B1-A (203 aa).

A DNA-binding region (OB) is located at residues 22–92 (IVLETGRVTK…TLYTGRGGDL (71 aa)). Positions 110–203 (EPNPEYIAQQ…GKESRRTGKR (94 aa)) are disordered. Over residues 118-140 (QQSQSKQGQQESGTGTNNHNSSS) the composition is skewed to low complexity. Residues 149–182 (ENGNGSNSSGPPAHQSTAPAHSASGRITRSQPNH) are compositionally biased toward polar residues.

Belongs to the SOSS-B family. SOSS-B1 subfamily. As to quaternary structure, component of the SOSS complex, composed of soss-b (soss-b1/nabp2 or soss-b2/nabp1), soss-a/ints3 and soss-c/inip. SOSS complexes containing soss-b1/nabp2 are more abundant than complexes containing soss-b2/nabp1.

The protein localises to the nucleus. In terms of biological role, component of the SOSS complex, a multiprotein complex that functions downstream of the MRN complex to promote DNA repair and G2/M checkpoint. In the SOSS complex, acts as a sensor of single-stranded DNA that binds to single-stranded DNA. The SOSS complex associates with DNA lesions and influences diverse endpoints in the cellular DNA damage response including cell-cycle checkpoint activation, recombinational repair and maintenance of genomic stability. Required for efficient homologous recombination-dependent repair of double-strand breaks (DSBs). In Xenopus laevis (African clawed frog), this protein is SOSS complex subunit B1-A (nabp2-a).